A 58-amino-acid polypeptide reads, in one-letter code: Large ribosomal subunit protein uL30 (58 aa).

It belongs to the universal ribosomal protein uL30 family. Part of the 50S ribosomal subunit.

This chain is Large ribosomal subunit protein uL30, found in Parabacteroides distasonis (strain ATCC 8503 / DSM 20701 / CIP 104284 / JCM 5825 / NCTC 11152).